Here is a 259-residue protein sequence, read N- to C-terminus: uncharacterized protein (259 aa).

The 159-residue stretch at 1–159 (MIEQFFRPDS…TEIIIKDPYR (159 aa)) folds into the FAD-binding PCMH-type domain.

This is an uncharacterized protein from Escherichia coli O157:H7.